Reading from the N-terminus, the 449-residue chain is Hyaluronidase (449 aa).

The N-terminal stretch at 1–23 (MYHIWIKFLAAWIFLKRFNGVHV) is a signal peptide. Cystine bridges form between C47–C340 and C211–C227. N67, N103, and N111 each carry an N-linked (GlcNAc...) asparagine glycan. Residue E135 is the Proton donor of the active site. The N-linked (GlcNAc...) asparagine glycan is linked to N153. An N-linked (GlcNAc...) asparagine glycan is attached at N357. Disulfide bonds link C365–C376, C370–C427, and C429–C438. A glycan (N-linked (GlcNAc...) asparagine) is linked at N401. Residues 427–438 (CQCYQGWKGLYC) form the EGF-like domain.

The protein belongs to the glycosyl hydrolase 56 family. In terms of assembly, monomer. In terms of tissue distribution, expressed by the venom gland.

The protein localises to the secreted. The catalysed reaction is Random hydrolysis of (1-&gt;4)-linkages between N-acetyl-beta-D-glucosamine and D-glucuronate residues in hyaluronate.. Functionally, snake venom endo-hyaluronidase that degrades hyaluronan to smaller oligosaccharide fragments. In venom, it is not toxic by itself, but increases the diffusion of other venom proteins by degrading the extracellular matrix. In addition, it displays antiedematogenic activity. In Echis pyramidum leakeyi (Leakey's carpet viper), this protein is Hyaluronidase.